We begin with the raw amino-acid sequence, 650 residues long: MGKIIGIDLGTTNSCVAIMEGNQVKVIENSEGARTTPSIIAYMDDNEVLVGAPAKRQSVTNPKNTLFAVKRLIGRRFEEKEVQKDIGLMPYSIIKADNGDAWVEAHGEKLAPPQVSAEVLRKMKKTAEDYLGEPVTEAVITVPAYFNDSQRQATKDAGRIAGLEVKRIINEPTAAALAFGLDKAEKGDRKIAVYDLGGGTFDVSIIEIADVDGEMQFEVLSTNGDTFLGGEDFDQRIIDYIIGEFKKEQGVDLSKDVLALQRLKEAAEKAKIELSSGQQTEINLPYITADASGPKHLNLKITRAKLEALVEDLVERTIEPCRIAIKDAGVKVSDIDDVILVGGQTRMPKVMEKVKEFFGKDPRRDVNPDEAVAVGAAIQGQVLSGDRKDVLLLDVTPLSLGIETLGGVMTKMINKNTTIPTKHAQVYSTADDNQGAVTIKVFQGEREMAAGNKLLGEFNLEGIPPAPRGVPQIEVTFDIDANGILHVGAKDKATGKENKITIKANSGLSEAEIDQMIKDAEANAAEDHKLRELADSRNQGDALVHSTKKALTEYGDKLDAGEKEAIEAALKSLEDVLKDTSADKAAIDAKVEELGKVSQKLGEKMYADMQAQQAGAAGAAGAAEGAAHAGGAQQAADDVVDAEFKEVKKD.

Thr200 carries the phosphothreonine; by autocatalysis modification. Residues 614–634 (AGAAGAAGAAEGAAHAGGAQQ) form a disordered region.

Belongs to the heat shock protein 70 family.

Its function is as follows. Acts as a chaperone. This is Chaperone protein DnaK from Burkholderia cenocepacia (strain ATCC BAA-245 / DSM 16553 / LMG 16656 / NCTC 13227 / J2315 / CF5610) (Burkholderia cepacia (strain J2315)).